We begin with the raw amino-acid sequence, 112 residues long: DNA-binding protein TK1278 (112 aa).

The protein belongs to the PDCD5 family.

In Thermococcus kodakarensis (strain ATCC BAA-918 / JCM 12380 / KOD1) (Pyrococcus kodakaraensis (strain KOD1)), this protein is DNA-binding protein TK1278.